We begin with the raw amino-acid sequence, 381 residues long: tRNA pseudouridine synthase D (381 aa).

Catalysis depends on aspartate 81, which acts as the Nucleophile. A TRUD domain is found at 160–335; it reads GMPNYFGSQR…TLGSRRFFWV (176 aa).

The protein belongs to the pseudouridine synthase TruD family.

It carries out the reaction uridine(13) in tRNA = pseudouridine(13) in tRNA. In terms of biological role, responsible for synthesis of pseudouridine from uracil-13 in transfer RNAs. The protein is tRNA pseudouridine synthase D of Helicobacter acinonychis (strain Sheeba).